Here is a 689-residue protein sequence, read N- to C-terminus: Glycine--tRNA ligase beta subunit (689 aa).

This sequence belongs to the class-II aminoacyl-tRNA synthetase family. In terms of assembly, tetramer of two alpha and two beta subunits.

It localises to the cytoplasm. The catalysed reaction is tRNA(Gly) + glycine + ATP = glycyl-tRNA(Gly) + AMP + diphosphate. This chain is Glycine--tRNA ligase beta subunit, found in Pseudoalteromonas translucida (strain TAC 125).